Here is a 228-residue protein sequence, read N- to C-terminus: Ornithine decarboxylase antizyme 1 (228 aa).

A disordered region spans residues 17–55 (REKEGDKPSATIHASRTMPLLSLHSRGGSSSESSRVSLH). Low complexity predominate over residues 36–55 (LLSLHSRGGSSSESSRVSLH).

This sequence belongs to the ODC antizyme family. In terms of assembly, interacts with ODC1 and thereby sterically blocks ODC homodimerization. Forms a ternary complex with PSMB4 and OAZ1 before PSMB4 is incorporated into the 20S proteasome. Interacts with AZIN2; this interaction disrupts the interaction between the antizyme and ODC1. Interacts with FAM171A1.

In terms of biological role, ornithine decarboxylase (ODC) antizyme protein that negatively regulates ODC activity and intracellular polyamine biosynthesis and uptake in response to increased intracellular polyamine levels. Binds to ODC monomers, inhibiting the assembly of the functional ODC homodimer, and targets the monomers for ubiquitin-independent proteolytic destruction by the 26S proteasome. Triggers ODC degradation by inducing the exposure of a cryptic proteasome-interacting surface of ODC. Stabilizes AZIN2 by interfering with its ubiquitination. Also inhibits cellular uptake of polyamines by inactivating the polyamine uptake transporter. SMAD1/OAZ1/PSMB4 complex mediates the degradation of the CREBBP/EP300 repressor SNIP1. Involved in the translocation of AZIN2 from ER-Golgi intermediate compartment (ERGIC) to the cytosol. The sequence is that of Ornithine decarboxylase antizyme 1 (OAZ1) from Homo sapiens (Human).